The following is a 257-amino-acid chain: MTPSEFRQSVRSGAFRQPTAGQCGPFAQANLAILPNAYAHDFLRFCQANPKACPLLGVGEPGAFRLDVLGEDLDIRTDVPSYNVYRDGRLTERVESLEALWRDDFVVFAIGCSFSFEDMLAREGIALRHIEEGRNVPMYRTSIPNRRAGIFGGQLVVSMRPLRGADAIRAVQITSRFPGVHGAPVHIGHPLELGIADLGTPDFGDAVTVRDGELPVFWACGVTPQTALMEAKLPLAIAHTPGYMLMTDITNASLAVF.

This sequence belongs to the D-glutamate cyclase family.

The chain is Putative hydro-lyase Bamb_5282 from Burkholderia ambifaria (strain ATCC BAA-244 / DSM 16087 / CCUG 44356 / LMG 19182 / AMMD) (Burkholderia cepacia (strain AMMD)).